The following is a 105-amino-acid chain: Phosphoribosyl-ATP pyrophosphatase (105 aa).

It belongs to the PRA-PH family.

Its subcellular location is the cytoplasm. It carries out the reaction 1-(5-phospho-beta-D-ribosyl)-ATP + H2O = 1-(5-phospho-beta-D-ribosyl)-5'-AMP + diphosphate + H(+). Its pathway is amino-acid biosynthesis; L-histidine biosynthesis; L-histidine from 5-phospho-alpha-D-ribose 1-diphosphate: step 2/9. In Roseobacter denitrificans (strain ATCC 33942 / OCh 114) (Erythrobacter sp. (strain OCh 114)), this protein is Phosphoribosyl-ATP pyrophosphatase.